A 61-amino-acid chain; its full sequence is Alpha-conotoxine-like Am1.4 (61 aa).

The N-terminal stretch at 1 to 21 is a signal peptide; it reads MGMRMMFTVFLLVVLATTVVS. A propeptide spanning residues 22–44 is cleaved from the precursor; it reads FMSGRASHGRNAAASDLIALTIK.

It belongs to the conotoxin A superfamily. In terms of processing, is not hydroxylated. Post-translationally, contains 2 disulfide bonds. As to expression, expressed by the venom duct.

Its subcellular location is the secreted. Alpha-conotoxins act on postsynaptic membranes, they bind to the nicotinic acetylcholine receptors (nAChR) and thus inhibit them. This chain is Alpha-conotoxine-like Am1.4, found in Conus amadis (Amadis cone).